The following is an 84-amino-acid chain: Small ribosomal subunit protein bS18 (84 aa).

The protein belongs to the bacterial ribosomal protein bS18 family. In terms of assembly, part of the 30S ribosomal subunit. Forms a tight heterodimer with protein bS6.

Functionally, binds as a heterodimer with protein bS6 to the central domain of the 16S rRNA, where it helps stabilize the platform of the 30S subunit. The protein is Small ribosomal subunit protein bS18 of Mycobacterium sp. (strain JLS).